The following is a 1343-amino-acid chain: DNA-directed RNA polymerase subunit beta (1343 aa).

The protein belongs to the RNA polymerase beta chain family. As to quaternary structure, the RNAP catalytic core consists of 2 alpha, 1 beta, 1 beta' and 1 omega subunit. When a sigma factor is associated with the core the holoenzyme is formed, which can initiate transcription.

It catalyses the reaction RNA(n) + a ribonucleoside 5'-triphosphate = RNA(n+1) + diphosphate. Functionally, DNA-dependent RNA polymerase catalyzes the transcription of DNA into RNA using the four ribonucleoside triphosphates as substrates. The chain is DNA-directed RNA polymerase subunit beta from Shewanella pealeana (strain ATCC 700345 / ANG-SQ1).